The primary structure comprises 470 residues: Dihydrolipoyl dehydrogenase (470 aa).

FAD-binding positions include 39–47 (EKATLGGVC), lysine 56, and alanine 119. Cysteine 47 and cysteine 52 form a disulfide bridge. Residues 183-187 (GGGYI), glutamate 206, and 272-275 (TVGR) each bind NAD(+). Residues aspartate 315 and alanine 323 each contribute to the FAD site. Histidine 447 functions as the Proton acceptor in the catalytic mechanism.

It belongs to the class-I pyridine nucleotide-disulfide oxidoreductase family. As to quaternary structure, homodimer. Component of two multienzyme complexes: pyruvate dehydrogenase complex and oxoglutarate dehydrogenase complex. Requires FAD as cofactor.

The protein localises to the cytoplasm. The enzyme catalyses N(6)-[(R)-dihydrolipoyl]-L-lysyl-[protein] + NAD(+) = N(6)-[(R)-lipoyl]-L-lysyl-[protein] + NADH + H(+). Its function is as follows. Catalyzes the oxidation of dihydrolipoamide to lipoamide. The sequence is that of Dihydrolipoyl dehydrogenase (pdhD) from Bacillus subtilis (strain 168).